We begin with the raw amino-acid sequence, 1061 residues long: E3 ubiquitin-protein ligase Smurf1 (1061 aa).

One can recognise a C2 domain in the interval 1-116 (MNKLDYPRRN…KGAGFQRLDL (116 aa)). 2 disordered regions span residues 143-176 (SGNP…WEER) and 188-496 (HATK…SGQR). A WW 1 domain is found at 167–200 (DSLPEGWEERRTDNGRVYYVNHATKSTQWDRPRQ). Polar residues-rich tracts occupy residues 207 to 225 (SHAT…NSGD) and 233 to 255 (TRST…SVTA). Position 262 is a phosphoserine (Ser262). Residues 264-273 (EILSSVGKEN) are compositionally biased toward polar residues. Low complexity-rich tracts occupy residues 274–300 (TSPT…SAGG) and 311–322 (PATPTSSTTSAS). A compositionally biased stretch (polar residues) spans 348–359 (TPTSPTGQQNYV). Low complexity predominate over residues 360 to 378 (NGNAQNGSTSGNGSGQAAQ). Over residues 379-392 (PQSASNGWTQEDAA) the composition is skewed to polar residues. The span at 393–409 (TTTSPSTTTSPPRHSQS) shows a compositional bias: low complexity. Position 412 is a phosphothreonine (Thr412). Ser416 bears the Phosphoserine mark. Polar residues predominate over residues 417 to 439 (PPASVTPSANGNVHSPNANSTPA). Residues 480–494 (RNGGTSGGGGGGGSG) show a composition bias toward gly residues. WW domains are found at residues 513–546 (LDLP…DPRI) and 561–594 (GPLP…DPRL). An interaction with MAD region spans residues 513–602 (LDLPPGYEMR…RLSGSILQMI (90 aa)). 2 stretches are compositionally biased toward low complexity: residues 608–617 (PPTSAANAGT) and 624–656 (TPAT…TNPP). The segment at 608–661 (PPTSAANAGTPAPPSATPATPSAAAAVPPQATPASNATPTTLTTTTNPPHRIVP) is disordered. One can recognise an HECT domain in the interval 723-1061 (RAKDMRKRLM…VEETCGFAVE (339 aa)). The Glycyl thioester intermediate role is filled by Cys1029.

As to quaternary structure, interacts with phosphorylated MAD.

The enzyme catalyses S-ubiquitinyl-[E2 ubiquitin-conjugating enzyme]-L-cysteine + [acceptor protein]-L-lysine = [E2 ubiquitin-conjugating enzyme]-L-cysteine + N(6)-ubiquitinyl-[acceptor protein]-L-lysine.. Its pathway is protein modification; protein ubiquitination. In terms of biological role, E3 ubiquitin-protein ligase which accepts ubiquitin from an E2 ubiquitin-conjugating enzyme in the form of a thioester and then directly transfers the ubiquitin to targeted substrates. Down-regulates Dpp signaling after gastrulation by promoting MAD ubiquitination and subsequent degradation. The chain is E3 ubiquitin-protein ligase Smurf1 from Drosophila melanogaster (Fruit fly).